The sequence spans 332 residues: Agamous-like MADS-box protein AGL66 (332 aa).

The region spanning 1-61 is the MADS-box domain; sequence MGRVKLEIKR…DRLSLFSGKT (61 aa). Positions 120 to 151 form a coiled coil; the sequence is TAINSDVEELEHEVYKLQQQLLMAEEELRKYE.

As to quaternary structure, forms a heterodimer with AGL30. As to expression, expressed in pollen.

It localises to the nucleus. In terms of biological role, probable transcription factor that forms a heterodimer with the MADS-box protein AGL30 and is involved in the regulation of pollen maturation at the late stages of pollen development and pollen tube growth. The chain is Agamous-like MADS-box protein AGL66 from Arabidopsis thaliana (Mouse-ear cress).